The chain runs to 252 residues: 7-cyano-7-deazaguanine synthase (252 aa).

22-32 provides a ligand contact to ATP; that stretch reads FSGGQDSTTCL. Residues Cys215, Cys230, Cys233, and Cys236 each contribute to the Zn(2+) site.

It belongs to the QueC family. Requires Zn(2+) as cofactor.

It carries out the reaction 7-carboxy-7-deazaguanine + NH4(+) + ATP = 7-cyano-7-deazaguanine + ADP + phosphate + H2O + H(+). The protein operates within purine metabolism; 7-cyano-7-deazaguanine biosynthesis. Catalyzes the ATP-dependent conversion of 7-carboxy-7-deazaguanine (CDG) to 7-cyano-7-deazaguanine (preQ(0)). The chain is 7-cyano-7-deazaguanine synthase from Granulibacter bethesdensis (strain ATCC BAA-1260 / CGDNIH1).